The following is a 141-amino-acid chain: Large ribosomal subunit protein uL11 (141 aa).

Belongs to the universal ribosomal protein uL11 family. As to quaternary structure, part of the ribosomal stalk of the 50S ribosomal subunit. Interacts with L10 and the large rRNA to form the base of the stalk. L10 forms an elongated spine to which L12 dimers bind in a sequential fashion forming a multimeric L10(L12)X complex. One or more lysine residues are methylated.

Forms part of the ribosomal stalk which helps the ribosome interact with GTP-bound translation factors. This Streptococcus suis (strain 98HAH33) protein is Large ribosomal subunit protein uL11.